A 400-amino-acid polypeptide reads, in one-letter code: Poly(A) polymerase type 3 (400 aa).

ATP-binding positions include 97 to 99 (FGS), T106, 110 to 112 (DID), D164, K225, Y234, and 243 to 244 (GV). Residues D110, D112, and D164 each coordinate Mg(2+). Positions 382–390 (GEIINKNKK) match the Nuclear localization signal motif.

It belongs to the poly(A) polymerase family. Monomer. It depends on Mg(2+) as a cofactor. Requires Mn(2+) as cofactor.

The protein localises to the nucleus. The enzyme catalyses RNA(n) + ATP = RNA(n)-3'-adenine ribonucleotide + diphosphate. Its function is as follows. Polymerase that creates the 3'-poly(A) tail of mRNA's. May acquire specificity through interaction with a cleavage and polyadenylation factor (CPSF). In Xenopus laevis (African clawed frog), this protein is Poly(A) polymerase type 3.